The sequence spans 77 residues: Anionic peptide 17.1 (77 aa).

An N-terminal signal peptide occupies residues 1–24 (MASKTVLVLLLVSVLVSTFCTAKA).

It belongs to the non-disulfide-bridged peptide (NDBP) superfamily. Long chain multifunctional peptide (group 2) family. In terms of tissue distribution, expressed by the venom gland.

The protein resides in the secreted. This Lychas mucronatus (Chinese swimming scorpion) protein is Anionic peptide 17.1.